The primary structure comprises 951 residues: MASKKMTKSYFDVLGICCTSEVPLIENILNSMDGVKEFSVIVPSRTVIVVHDTLILSQFQIVKALNQAQLEANVRVTGETNFKNKWPSPFAVVSGILLLLSFFKYLYSPFRWLAVAAVVAGIYPILAKAVASLARFRIDINILVVVTVGATIGMQDYTEAAVVVFLFTIAEWLQSRASYKASAVMQSLMSLAPQKAVIAETGEEVEVDELKTNTVIAVKAGETIPIDGVVVDGNCEVDEKTLTGEAFPVPKLKDSTVWAGTINLNGYITVNTTALAEDCVVAKMAKLVEEAQNSKTETQRFIDKCSKYYTPAIILISICFVAIPFALKVHNLKHWVHLALVVLVSACPCGLILSTPVATFCALTKAATSGLLIKGADYLETLAKIKIVAFDKTGTITRGEFIVMDFQSLSEDISLQSLLYWVSSTESKSSHPMAAAVVDYARSVSVEPKPEAVEDYQNFPGEGIYGKIDGKEVYIGNKRIASRAGCLSVPDIDVDTKGGKTIGYVYVGETLAGVFNLSDACRSGVAQAMKELKSLGIKIAMLTGDNHAAAMHAQEQLGNAMDIVRAELLPEDKSEIIKQLKREEGPTAMVGDGLNDAPALATADIGISMGVSGSALATETGNIILMSNDIRRIPQAIKLAKRAKRKVVENVVISITMKGAILALAFAGHPLIWAAVLADVGTCLLVILNSMLLLSDKHKTGNKCYRESSSSSVLIAEKLEGDAAGDMEAGLLPKISDKHCKPGCCGTKTQEKAMKPAKASSDHSHSGCCETKQKDNVTVVKKSCCAEPVDLGHGHDSGCCGDKSQQPHQHEVQVQQSCHNKPSGLDSGCCGGKSQQPHQHELQQSCHDKPSGLDIGTGPKHEGSSTLVNLEGDAKEELKVLVNGFCSSPADLAITSLKVKSDSHCKSNCSSRERCHHGSNCCRSYAKESCSHDHHHTRAHGVGTLKEIVIE.

Residues 1–83 are Cytoplasmic-facing; that stretch reads MASKKMTKSY…VRVTGETNFK (83 aa). An HMA domain is found at 7 to 73; it reads TKSYFDVLGI…ALNQAQLEAN (67 aa). The helical transmembrane segment at 84–105 threads the bilayer; it reads NKWPSPFAVVSGILLLLSFFKY. At 106–108 the chain is on the extracellular side; the sequence is LYS. A helical transmembrane segment spans residues 109–128; sequence PFRWLAVAAVVAGIYPILAK. Topologically, residues 129 to 135 are cytoplasmic; sequence AVASLAR. Residues 136–156 form a helical membrane-spanning segment; the sequence is FRIDINILVVVTVGATIGMQD. Tyr-157 is a topological domain (extracellular). Residues 158–178 form a helical membrane-spanning segment; it reads TEAAVVVFLFTIAEWLQSRAS. The Cytoplasmic segment spans residues 179 to 304; the sequence is YKASAVMQSL…KTETQRFIDK (126 aa). Residues 305–327 traverse the membrane as a helical segment; that stretch reads CSKYYTPAIILISICFVAIPFAL. The Extracellular segment spans residues 328–335; sequence KVHNLKHW. The chain crosses the membrane as a helical span at residues 336 to 353; that stretch reads VHLALVVLVSACPCGLIL. The Cytoplasmic portion of the chain corresponds to 354–647; sequence STPVATFCAL…KLAKRAKRKV (294 aa). Asp-391 functions as the 4-aspartylphosphate intermediate in the catalytic mechanism. Mg(2+) contacts are provided by Asp-592 and Asp-596. The chain crosses the membrane as a helical span at residues 648 to 667; it reads VENVVISITMKGAILALAFA. Over 668 to 671 the chain is Extracellular; the sequence is GHPL. Residues 672-691 traverse the membrane as a helical segment; that stretch reads IWAAVLADVGTCLLVILNSM. Topologically, residues 692–951 are cytoplasmic; that stretch reads LLLSDKHKTG…VGTLKEIVIE (260 aa). Over residues 841 to 851 the composition is skewed to basic and acidic residues; it reads ELQQSCHDKPS. The tract at residues 841–866 is disordered; that stretch reads ELQQSCHDKPSGLDIGTGPKHEGSST.

It belongs to the cation transport ATPase (P-type) (TC 3.A.3) family. Type IB subfamily. In terms of tissue distribution, predominantly expressed in the vascular tissues of roots, stems, and leaves. Also detected in developing anthers.

It is found in the cell membrane. The enzyme catalyses Zn(2+)(in) + ATP + H2O = Zn(2+)(out) + ADP + phosphate + H(+). It carries out the reaction Cd(2+)(in) + ATP + H2O = Cd(2+)(out) + ADP + phosphate + H(+). Functionally, plays an important role in zinc transport and homeostasis. Could also be involved in cadmium detoxification. The protein is Cadmium/zinc-transporting ATPase HMA2 (HMA2) of Arabidopsis thaliana (Mouse-ear cress).